The following is a 443-amino-acid chain: MSELTDLLLQGPRSAPELRQRLAISQATFSRLVAREDRVIRFGKARATRYALLRPYRGIERIPVWRVDDTGKAHKFADIRLCWPQGSCLVTGADGDEQWFDGLPWYLTDLRPQGFLGRAWGRKLAAQLNLTDDIRLWQEEDVLYALTVFNGEYTGGWLVGEGNYQRWITAQHPAEIPLDQKLTHYEQLASDALAGEIVGSSAGGEQPKFTYYAQTPSGNKHVLVKFTVPQQTAVSQRWGDLLIAESIAAQILRDGGIHAIESTVLVTSNRQVFLEAERFDCKGNDGRLPIVSLEAVQSEFISSPGSWPQAMRRLCEQQLVTHQSVAQTEVIWAFGRLIANSDMHAGNLSFYLSEPPFALTPVYDMLPMVYAPNSAGMLRDAAIEVKFDLNVSKSAWLTAIPLAQQFWQTVARDPRISEAFRHIAQEMPEKIRQIEEKVARMGG.

The active-site Proton acceptor is Asp342.

The protein belongs to the HipA Ser/Thr kinase family.

Its function is as follows. Toxic when overexpressed in E.coli, leading to long filamentous cells. The toxic effect is neutralized by non-cognate antitoxin HipB. Does not seem to inhibit DNA, RNA or protein synthesis, and unlike paralogous toxin HipA its toxic activity is not counteracted by overexpression of GltX. Binds DNA. Might be a protein kinase. This chain is Toxin YjjJ (yjjJ), found in Escherichia coli (strain K12).